Reading from the N-terminus, the 139-residue chain is Intrinsically disordered protein, expressed in pharynx 15 (139 aa).

The segment covering 1–12 (MNNNQGMYNTQT) has biased composition (polar residues). Residues 1 to 98 (MNNNQGMYNT…GSSTPSPQYS (98 aa)) form a disordered region. 2 stretches are compositionally biased toward low complexity: residues 13-41 (TQGY…QTTT) and 49-98 (QPQQ…PQYS).

The protein is Intrinsically disordered protein, expressed in pharynx 15 of Caenorhabditis elegans.